The following is a 147-amino-acid chain: UPF0260 protein CJA_2436 (147 aa).

It belongs to the UPF0260 family.

The chain is UPF0260 protein CJA_2436 from Cellvibrio japonicus (strain Ueda107) (Pseudomonas fluorescens subsp. cellulosa).